A 405-amino-acid polypeptide reads, in one-letter code: Glucose-1-phosphate adenylyltransferase (405 aa).

Residues Tyr-99, Gly-164, Glu-179–Lys-180, and Ser-197 contribute to the alpha-D-glucose 1-phosphate site.

This sequence belongs to the bacterial/plant glucose-1-phosphate adenylyltransferase family. Homotetramer.

The enzyme catalyses alpha-D-glucose 1-phosphate + ATP + H(+) = ADP-alpha-D-glucose + diphosphate. Its pathway is glycan biosynthesis; glycogen biosynthesis. In terms of biological role, involved in the biosynthesis of ADP-glucose, a building block required for the elongation reactions to produce glycogen. Catalyzes the reaction between ATP and alpha-D-glucose 1-phosphate (G1P) to produce pyrophosphate and ADP-Glc. The chain is Glucose-1-phosphate adenylyltransferase from Corynebacterium aurimucosum (strain ATCC 700975 / DSM 44827 / CIP 107346 / CN-1) (Corynebacterium nigricans).